We begin with the raw amino-acid sequence, 134 residues long: MSPFFMMSLLFGLTFGQTASVCAPSEYTIHVEKRECAYCLAINTTICAGFCMTRDSNGKKLLLKSALSQNVCTYKEMFYQTALIPGCPHHTIPYYSYPVAISCKCGKCNTDYSDCVHEKVRTNYCTKPQKLCNM.

The signal sequence occupies residues 1 to 16 (MSPFFMMSLLFGLTFG). 6 cysteine pairs are disulfide-bonded: C22/C72, C36/C87, C39/C125, C47/C103, C51/C105, and C108/C115. N43 carries N-linked (GlcNAc...) asparagine glycosylation.

Belongs to the glycoprotein hormones subunit beta family. Heterodimer of a common alpha chain and a unique beta chain which confers biological specificity to thyrotropin, lutropin, follitropin and gonadotropin.

The protein localises to the secreted. Indispensable for the control of thyroid structure and metabolism. This chain is Thyrotropin subunit beta (TSHB), found in Gallus gallus (Chicken).